An 82-amino-acid chain; its full sequence is RNA-binding protein Hfq (82 aa).

Residues 11–71 form the Sm domain; sequence DTFLNHVRKT…ISTIMPGAPI (61 aa).

Belongs to the Hfq family. In terms of assembly, homohexamer.

RNA chaperone that binds small regulatory RNA (sRNAs) and mRNAs to facilitate mRNA translational regulation in response to envelope stress, environmental stress and changes in metabolite concentrations. Also binds with high specificity to tRNAs. This chain is RNA-binding protein Hfq, found in Rhodopseudomonas palustris (strain BisA53).